Consider the following 356-residue polypeptide: Putative KilA-N domain-containing protein R878 (356 aa).

Positions 1–12 (MKVRKSNNKPLK) are enriched in basic residues. A disordered region spans residues 1–114 (MKVRKSNNKP…DDDGSDNNVY (114 aa)). The span at 14 to 46 (SASFTSGTKTGSKSAKSVNSGSKSMKSTKSSSK) shows a compositional bias: low complexity. The segment covering 66–114 (SDNDELSDNEISDNESSDDDEISDNESSDDDEISDNEISDDDGSDNNVY) has biased composition (acidic residues). Residues 130-239 (NYSKGKFGNF…VRIGFCMEEW (110 aa)) enclose the KilA-N domain.

In Acanthamoeba polyphaga (Amoeba), this protein is Putative KilA-N domain-containing protein R878.